Here is a 171-residue protein sequence, read N- to C-terminus: Crossover junction endodeoxyribonuclease RuvC (171 aa).

Active-site residues include aspartate 11, glutamate 71, and aspartate 143. Aspartate 11, glutamate 71, and aspartate 143 together coordinate Mg(2+).

The protein belongs to the RuvC family. Homodimer which binds Holliday junction (HJ) DNA. The HJ becomes 2-fold symmetrical on binding to RuvC with unstacked arms; it has a different conformation from HJ DNA in complex with RuvA. In the full resolvosome a probable DNA-RuvA(4)-RuvB(12)-RuvC(2) complex forms which resolves the HJ. It depends on Mg(2+) as a cofactor.

It localises to the cytoplasm. The catalysed reaction is Endonucleolytic cleavage at a junction such as a reciprocal single-stranded crossover between two homologous DNA duplexes (Holliday junction).. Functionally, the RuvA-RuvB-RuvC complex processes Holliday junction (HJ) DNA during genetic recombination and DNA repair. Endonuclease that resolves HJ intermediates. Cleaves cruciform DNA by making single-stranded nicks across the HJ at symmetrical positions within the homologous arms, yielding a 5'-phosphate and a 3'-hydroxyl group; requires a central core of homology in the junction. The consensus cleavage sequence is 5'-(A/T)TT(C/G)-3'. Cleavage occurs on the 3'-side of the TT dinucleotide at the point of strand exchange. HJ branch migration catalyzed by RuvA-RuvB allows RuvC to scan DNA until it finds its consensus sequence, where it cleaves and resolves the cruciform DNA. The sequence is that of Crossover junction endodeoxyribonuclease RuvC from Chelativorans sp. (strain BNC1).